The sequence spans 319 residues: Olfactory receptor 5B21 (319 aa).

At 1–26 the chain is on the extracellular side; sequence MTSMENITEVTEFILLGLTDDPNLQV. N-linked (GlcNAc...) asparagine glycosylation occurs at asparagine 6. A helical transmembrane segment spans residues 27–47; sequence PLLLIFLFIYLVTLIGNGGMM. The Cytoplasmic segment spans residues 48-55; it reads VIIFSDSH. Residues 56–76 form a helical membrane-spanning segment; it reads LHTPMYFFLSNLSFVDLGYSS. The Extracellular portion of the chain corresponds to 77-100; it reads AVAPKMVAALQSGNKVISYNGCAA. Cysteine 98 and cysteine 190 form a disulfide bridge. A helical membrane pass occupies residues 101–121; that stretch reads QFFFFVGFATVECYLLASMAY. Residues 122 to 134 lie on the Cytoplasmic side of the membrane; the sequence is DRHAAVCRPLHYT. The helical transmembrane segment at 135–155 threads the bilayer; it reads TTMTTGVCTILTIGSYTCGFL. Residues 156 to 197 lie on the Extracellular side of the membrane; it reads NASIHAADTFKLSFCGSNKINHFFCDIPPLLALACSSTHISK. Residues 198–218 form a helical membrane-spanning segment; sequence LVVFFVVGFNVFFTLLVIIIS. The Cytoplasmic portion of the chain corresponds to 219–238; sequence YFFIYIAIQNMKSSEGRKKA. The chain crosses the membrane as a helical span at residues 239–259; sequence FSTCASHLTAVSIFYGTIIFM. Residues 260–272 lie on the Extracellular side of the membrane; it reads YLQPSSGQSMDTD. The helical transmembrane segment at 273-293 threads the bilayer; it reads KIASVFYTVVIPMLNPLIYSL. Topologically, residues 294–319 are cytoplasmic; that stretch reads RNREVKSALWKILNRFYPASFSVSRK.

It belongs to the G-protein coupled receptor 1 family.

The protein localises to the cell membrane. Its function is as follows. Odorant receptor. The sequence is that of Olfactory receptor 5B21 from Mus musculus (Mouse).